The chain runs to 61 residues: Large ribosomal subunit protein uL30 (61 aa).

Belongs to the universal ribosomal protein uL30 family. In terms of assembly, part of the 50S ribosomal subunit.

The protein is Large ribosomal subunit protein uL30 of Mycobacterium sp. (strain KMS).